We begin with the raw amino-acid sequence, 129 residues long: uncharacterized protein (129 aa).

An N-terminal signal peptide occupies residues 1-17 (MCPECFFLMLFFCGYRA). Low complexity predominate over residues 26–36 (SSSSSSSFRSS). Positions 26-76 (SSSSSSSFRSSPAYGFSGRPPGGAGCRERSQRSCLRPGGLPSLTRNPGLQR) are disordered.

This is an uncharacterized protein from Escherichia coli O157:H7.